Consider the following 127-residue polypeptide: Nitrogenase-stabilizing/protective protein NifW (127 aa).

This sequence belongs to the NifW family. Homotrimer; associates with NifD.

In terms of biological role, may protect the nitrogenase Fe-Mo protein from oxidative damage. This is Nitrogenase-stabilizing/protective protein NifW from Rhizobium etli (strain ATCC 51251 / DSM 11541 / JCM 21823 / NBRC 15573 / CFN 42).